A 462-amino-acid polypeptide reads, in one-letter code: Amino-acid permease AapA (462 aa).

The next 12 helical transmembrane spans lie at 27 to 47 (LMAI…KSIH), 48 to 68 (FAGP…FFIM), 96 to 116 (AAFI…MADL), 134 to 154 (LPGL…VKLF), 160 to 180 (WFAL…ILLI), 209 to 229 (GFIL…LVGL), 252 to 272 (ILLF…WNVL), 279 to 299 (FVQV…NFVV), 343 to 363 (ALFF…LMPE), 366 to 386 (FTLI…ITVI), 410 to 430 (PLSN…LALA), and 435 to 455 (IALF…KVQT).

This sequence belongs to the amino acid-polyamine-organocation (APC) superfamily.

Its subcellular location is the cell membrane. Its function is as follows. Probable amino-acid or metabolite transport protein. This chain is Amino-acid permease AapA (aapA), found in Bacillus subtilis (strain 168).